Consider the following 538-residue polypeptide: Bifunctional purine biosynthesis protein PurH (538 aa).

The MGS-like domain maps to 8 to 158; sequence IPAPDKVEIK…KNHAYVTILT (151 aa).

This sequence belongs to the PurH family.

It catalyses the reaction (6R)-10-formyltetrahydrofolate + 5-amino-1-(5-phospho-beta-D-ribosyl)imidazole-4-carboxamide = 5-formamido-1-(5-phospho-D-ribosyl)imidazole-4-carboxamide + (6S)-5,6,7,8-tetrahydrofolate. It carries out the reaction IMP + H2O = 5-formamido-1-(5-phospho-D-ribosyl)imidazole-4-carboxamide. It functions in the pathway purine metabolism; IMP biosynthesis via de novo pathway; 5-formamido-1-(5-phospho-D-ribosyl)imidazole-4-carboxamide from 5-amino-1-(5-phospho-D-ribosyl)imidazole-4-carboxamide (10-formyl THF route): step 1/1. It participates in purine metabolism; IMP biosynthesis via de novo pathway; IMP from 5-formamido-1-(5-phospho-D-ribosyl)imidazole-4-carboxamide: step 1/1. The protein is Bifunctional purine biosynthesis protein PurH of Rhizobium leguminosarum bv. trifolii (strain WSM2304).